Here is a 442-residue protein sequence, read N- to C-terminus: GTPase Der (442 aa).

EngA-type G domains lie at 2-167 (RTIA…PIQN) and 175-351 (FKFC…EQAM). Residues 8 to 15 (GKPNVGKS), 55 to 59 (DTGGI), 119 to 122 (NKVE), 181 to 188 (GRPNVGKS), 228 to 232 (DTAGV), and 293 to 296 (NKWD) each bind GTP. The region spanning 352–436 (RKVATSLLND…PITLYWQDKN (85 aa)) is the KH-like domain.

Belongs to the TRAFAC class TrmE-Era-EngA-EngB-Septin-like GTPase superfamily. EngA (Der) GTPase family. Associates with the 50S ribosomal subunit.

GTPase that plays an essential role in the late steps of ribosome biogenesis. The protein is GTPase Der of Ureaplasma urealyticum serovar 10 (strain ATCC 33699 / Western).